The primary structure comprises 82 residues: Sec-independent protein translocase protein TatA (82 aa).

A helical membrane pass occupies residues 1 to 21; that stretch reads MGSFSIWHWLIVLLIVVMVFG. The disordered stretch occupies residues 46-82; it reads GASTDDSATTSAPAGQVTNNSAAADKTTIDVEAKHKS. Polar residues predominate over residues 49–67; it reads TDDSATTSAPAGQVTNNSA. Positions 72–82 are enriched in basic and acidic residues; it reads TTIDVEAKHKS.

It belongs to the TatA/E family. The Tat system comprises two distinct complexes: a TatABC complex, containing multiple copies of TatA, TatB and TatC subunits, and a separate TatA complex, containing only TatA subunits. Substrates initially bind to the TatABC complex, which probably triggers association of the separate TatA complex to form the active translocon.

It is found in the cell inner membrane. Its function is as follows. Part of the twin-arginine translocation (Tat) system that transports large folded proteins containing a characteristic twin-arginine motif in their signal peptide across membranes. TatA could form the protein-conducting channel of the Tat system. This is Sec-independent protein translocase protein TatA from Acidovorax ebreus (strain TPSY) (Diaphorobacter sp. (strain TPSY)).